We begin with the raw amino-acid sequence, 148 residues long: Large ribosomal subunit protein uL15 (148 aa).

Residues 1–51 (MNLSSLKPAEGAVKSRKRIGRGPGSGLGGTSTRGHKGAKSRSGYSKKIGFE) are disordered. Residues 21-31 (RGPGSGLGGTS) show a composition bias toward gly residues.

Belongs to the universal ribosomal protein uL15 family. Part of the 50S ribosomal subunit.

Binds to the 23S rRNA. In Porphyromonas gingivalis (strain ATCC 33277 / DSM 20709 / CIP 103683 / JCM 12257 / NCTC 11834 / 2561), this protein is Large ribosomal subunit protein uL15.